The sequence spans 651 residues: Protein RcaC (651 aa).

One can recognise a Response regulatory 1 domain in the interval 2-116 (KILLVEDDDV…ELIARIRALL (115 aa)). A 4-aspartylphosphate modification is found at aspartate 51. A DNA-binding region (ompR/PhoB-type) is located at residues 124 to 223 (FPLLTWGDLL…MHGRGYYLKA (100 aa)). Response regulatory domains lie at 384-519 (LLLM…VNLL) and 527-643 (KVMI…LRRL).

In terms of biological role, required for chromatic adaptation. Thought to be a positive regulator of phycobiliproteins. The chain is Protein RcaC (rcaC) from Microchaete diplosiphon (Fremyella diplosiphon).